Here is a 756-residue protein sequence, read N- to C-terminus: Nucleomorphin (756 aa).

The span at 1-10 (MDLDYSSDNS) shows a compositional bias: polar residues. The interval 1-113 (MDLDYSSDNS…SQSNEDLSSS (113 aa)) is disordered. 2 stretches are compositionally biased toward low complexity: residues 16 to 66 (NQNN…RPSS) and 75 to 94 (NNNN…NNNN). A compositionally biased stretch (polar residues) spans 95–113 (GATISHPPTSQSNEDLSSS). Residues 124–216 (LNSNIFENLG…ELLGVENYLV (93 aa)) form the BRCT domain. 4 disordered regions span residues 229–251 (NSSQ…INEQ), 272–298 (PSSL…LKSE), 359–403 (KIDL…NKNN), and 422–463 (TSST…LLNL). Composition is skewed to low complexity over residues 285-298 (LQTQ…LKSE), 364-401 (NNNN…NKNK), and 422-432 (TSSTSSTLSSS). Residues 448–459 (KSKKKFSQKKNH) show a composition bias toward basic residues. Positions 464-480 (KKSYQDPEIIAHSRPRK) match the Nuclear localization signal motif. The tract at residues 495 to 512 (ANYISNLDGFKYYARANK) is calmodulin binding. Polar residues predominate over residues 514 to 529 (SLNSNATTSGGNNRSI). The interval 514 to 587 (SLNSNATTSG…SDEDDFDSDE (74 aa)) is disordered. A compositionally biased stretch (acidic residues) spans 536 to 587 (YDDEEEDEEDEDEEDEEEDEEEEEEEEEEEEDYDDEDLNDEESDEDDFDSDE). A DEED region region spans residues 537-588 (DDEEEDEEDEDEEDEEEDEEEEEEEEEEEEDYDDEDLNDEESDEDDFDSDED). Calmodulin binding stretches follow at residues 589 to 606 (VSRF…KIYK) and 596 to 613 (KLLQ…RFEH). Disordered regions lie at residues 613 to 639 (HSRQ…SHSR) and 660 to 700 (LSPT…RTNI). Residues 668–691 (LSNQFHQDGGNNTTDGNLFNNFST) show a composition bias toward polar residues.

Interacts with calmodulin and CBPD1 in the presence of Ca(2+).

The protein resides in the nucleus. The protein is Nucleomorphin (numA) of Dictyostelium discoideum (Social amoeba).